Here is a 69-residue protein sequence, read N- to C-terminus: Cytochrome c oxidase subunit 8A, mitochondrial (69 aa).

Residues 1-25 (MSVLTPLLLRGLTGSARRLPVPRAK) constitute a mitochondrion transit peptide. The SIFI-degron signature appears at 2-19 (SVLTPLLLRGLTGSARRL). The Mitochondrial matrix segment spans residues 26 to 36 (IHSLPPDEKLG). The helical transmembrane segment at 37-60 (IMELAVGLTSCFVTFLLPAGWILS) threads the bilayer. The Mitochondrial intermembrane portion of the chain corresponds to 61–69 (HLETYRRPE).

Belongs to the cytochrome c oxidase VIII family. As to quaternary structure, component of the cytochrome c oxidase (complex IV, CIV), a multisubunit enzyme composed of 14 subunits. The complex is composed of a catalytic core of 3 subunits MT-CO1, MT-CO2 and MT-CO3, encoded in the mitochondrial DNA, and 11 supernumerary subunits COX4I, COX5A, COX5B, COX6A, COX6B, COX6C, COX7A, COX7B, COX7C, COX8 and NDUFA4, which are encoded in the nuclear genome. The complex exists as a monomer or a dimer and forms supercomplexes (SCs) in the inner mitochondrial membrane with NADH-ubiquinone oxidoreductase (complex I, CI) and ubiquinol-cytochrome c oxidoreductase (cytochrome b-c1 complex, complex III, CIII), resulting in different assemblies (supercomplex SCI(1)III(2)IV(1) and megacomplex MCI(2)III(2)IV(2)). Post-translationally, in response to mitochondrial stress, the precursor protein is ubiquitinated by the SIFI complex in the cytoplasm before mitochondrial import, leading to its degradation. Within the SIFI complex, UBR4 initiates ubiquitin chain that are further elongated or branched by KCMF1.

It is found in the mitochondrion inner membrane. Its pathway is energy metabolism; oxidative phosphorylation. Functionally, component of the cytochrome c oxidase, the last enzyme in the mitochondrial electron transport chain which drives oxidative phosphorylation. The respiratory chain contains 3 multisubunit complexes succinate dehydrogenase (complex II, CII), ubiquinol-cytochrome c oxidoreductase (cytochrome b-c1 complex, complex III, CIII) and cytochrome c oxidase (complex IV, CIV), that cooperate to transfer electrons derived from NADH and succinate to molecular oxygen, creating an electrochemical gradient over the inner membrane that drives transmembrane transport and the ATP synthase. Cytochrome c oxidase is the component of the respiratory chain that catalyzes the reduction of oxygen to water. Electrons originating from reduced cytochrome c in the intermembrane space (IMS) are transferred via the dinuclear copper A center (CU(A)) of subunit 2 and heme A of subunit 1 to the active site in subunit 1, a binuclear center (BNC) formed by heme A3 and copper B (CU(B)). The BNC reduces molecular oxygen to 2 water molecules using 4 electrons from cytochrome c in the IMS and 4 protons from the mitochondrial matrix. This Gorilla gorilla gorilla (Western lowland gorilla) protein is Cytochrome c oxidase subunit 8A, mitochondrial (COX8A).